A 148-amino-acid polypeptide reads, in one-letter code: Large ribosomal subunit protein bL9 (148 aa).

The protein belongs to the bacterial ribosomal protein bL9 family.

Functionally, binds to the 23S rRNA. The chain is Large ribosomal subunit protein bL9 from Bacillus cereus (strain G9842).